Reading from the N-terminus, the 419-residue chain is D-amino acid dehydrogenase (419 aa).

3–17 (VLILGGGVVGVTSAY) provides a ligand contact to FAD.

This sequence belongs to the DadA oxidoreductase family. FAD serves as cofactor.

The enzyme catalyses a D-alpha-amino acid + A + H2O = a 2-oxocarboxylate + AH2 + NH4(+). Its pathway is amino-acid degradation; D-alanine degradation; NH(3) and pyruvate from D-alanine: step 1/1. Its function is as follows. Oxidative deamination of D-amino acids. The chain is D-amino acid dehydrogenase from Methylobacterium radiotolerans (strain ATCC 27329 / DSM 1819 / JCM 2831 / NBRC 15690 / NCIMB 10815 / 0-1).